The sequence spans 83 residues: Small ribosomal subunit protein bS16 (83 aa).

This sequence belongs to the bacterial ribosomal protein bS16 family.

This is Small ribosomal subunit protein bS16 from Shewanella woodyi (strain ATCC 51908 / MS32).